The chain runs to 529 residues: Intraflagellar transport protein 56 (529 aa).

The tract at residues 1-21 is disordered; the sequence is MLHNRMTTAFERSKEQEHEAA. Residues 11 to 21 show a composition bias toward basic and acidic residues; sequence ERSKEQEHEAA. TPR repeat units lie at residues 57-90, 154-187, 189-221, 285-321, 359-392, and 428-461; these read GNAD…KNPP, SADQ…QPEC, AIYM…AEDS, SEAR…EYTL, VLGR…PKES, and PVHR…SLQT.

It belongs to the IFT56 family.

The protein resides in the cell projection. It is found in the cilium. Its subcellular location is the flagellum. The protein localises to the cytoplasm. It localises to the cytoskeleton. The protein resides in the flagellum axoneme. It is found in the flagellum basal body. Its function is as follows. Component of the intraflagellar transport complex B (IFT-B) involved in flagellar assembly. The sequence is that of Intraflagellar transport protein 56 from Giardia intestinalis (strain ATCC 50803 / WB clone C6) (Giardia lamblia).